The following is a 274-amino-acid chain: Orotidine 5'-phosphate decarboxylase (274 aa).

Lysine 96 functions as the Proton donor in the catalytic mechanism.

It belongs to the OMP decarboxylase family. Type 2 subfamily.

The catalysed reaction is orotidine 5'-phosphate + H(+) = UMP + CO2. Its pathway is pyrimidine metabolism; UMP biosynthesis via de novo pathway; UMP from orotate: step 2/2. The sequence is that of Orotidine 5'-phosphate decarboxylase from Bacteroides fragilis (strain YCH46).